A 68-amino-acid chain; its full sequence is Large ribosomal subunit protein bL32 (68 aa).

The interval Met-1 to Asp-20 is disordered.

The protein belongs to the bacterial ribosomal protein bL32 family.

The chain is Large ribosomal subunit protein bL32 from Cereibacter sphaeroides (strain ATCC 17029 / ATH 2.4.9) (Rhodobacter sphaeroides).